An 823-amino-acid polypeptide reads, in one-letter code: Degenerin-like protein asic-1 (823 aa).

At methionine 1–tyrosine 38 the chain is on the cytoplasmic side. Residues methionine 39–valine 59 traverse the membrane as a helical segment. Residues glutamate 60 to glycine 767 are Extracellular-facing. 2 cysteine pairs are disulfide-bonded: cysteine 86/cysteine 518 and cysteine 494/cysteine 501. N-linked (GlcNAc...) asparagine glycosylation is found at asparagine 228, asparagine 326, asparagine 347, asparagine 415, and asparagine 486. 2 N-linked (GlcNAc...) asparagine glycosylation sites follow: asparagine 527 and asparagine 546. 4 disulfides stabilise this stretch: cysteine 604/cysteine 687, cysteine 625/cysteine 683, cysteine 629/cysteine 681, and cysteine 638/cysteine 664. The GAS motif; ion selectivity filter signature appears at glycine 767 to serine 769. Residues valine 768–isoleucine 788 form a helical membrane-spanning segment. Residues serine 789–arginine 795 lie on the Cytoplasmic side of the membrane.

It belongs to the amiloride-sensitive sodium channel (TC 1.A.6) family. As to quaternary structure, homotrimer. Heterotrimer; with other ASIC proteins producing channel with different properties.

It localises to the cell membrane. The protein localises to the postsynaptic cell membrane. The protein resides in the cell projection. It is found in the dendrite. The catalysed reaction is Na(+)(in) = Na(+)(out). It carries out the reaction K(+)(in) = K(+)(out). The enzyme catalyses Li(+)(in) = Li(+)(out). It catalyses the reaction Ca(2+)(in) = Ca(2+)(out). Functionally, forms voltage-independent, pH-gated trimeric sodium channels that act as postsynaptic excitatory receptors in the nervous system, playing a crucial role in regulating synaptic plasticity, learning, and memory. Promotes synaptic vesicle fusion to positively regulate the release of dopamine at dopaminergic neuron synapses. Displays high selectivity for sodium ions but can also permit the permeation of other cations. The sequence is that of Degenerin-like protein asic-1 from Caenorhabditis elegans.